A 328-amino-acid chain; its full sequence is Sin3 histone deacetylase corepressor complex component SDS3 (328 aa).

Residues 1 to 64 (MSAAALLAPA…TDLAKHDEED (64 aa)) are disordered. At Ser-2 the chain carries N-acetylserine. Positions 2-170 (SAAALLAPAP…IENEKLTMEL (169 aa)) are mediates interaction with USP17L2. A compositionally biased stretch (pro residues) spans 10 to 21 (APAPAGAPPAPE). Acidic residues-rich tracts occupy residues 23 to 37 (YPEE…EDDE) and 45 to 54 (SDEDTEDASE). Ser-32 and Ser-45 each carry phosphoserine. Position 49 is a phosphothreonine (Thr-49). Ser-53 is modified (phosphoserine). Residues 64–171 (DFVEMKEQMY…ENEKLTMELT (108 aa)) adopt a coiled-coil conformation. Glycyl lysine isopeptide (Lys-Gly) (interchain with G-Cter in SUMO2) cross-links involve residues Lys-69, Lys-178, and Lys-201. The disordered stretch occupies residues 226 to 252 (LKSPKRPASPSSPEHLPTTPAESPAQR). A phosphoserine mark is found at Ser-228, Ser-234, and Ser-237. At Thr-244 the chain carries Phosphothreonine.

The protein belongs to the SDS3 family. As to quaternary structure, homodimer. Component of the SIN3 histone deacetylase (HDAC) corepressor complex. Interacts with SIN3A. Interaction with SIN3B enhances the interaction between SIN3B and HDAC1 to form a complex. Interacts with HCFC1. Component of a mSin3A corepressor complex that contains SIN3A, SAP130, SUDS3/SAP45, ARID4B/SAP180, HDAC1 and HDAC2. Interacts with USP17L2; the interaction is direct. Interacts with FOXK2. Polyubiquitinated. 'Lys-63'-polyubiquitinated SUDS3 positively regulates histone deacetylation. Regulated through deubiquitination by USP17L2/USP17 that cleaves 'Lys-63'-linked ubiquitin chains.

The protein localises to the nucleus. Functionally, regulatory protein which represses transcription and augments histone deacetylase activity of HDAC1. May have a potential role in tumor suppressor pathways through regulation of apoptosis. May function in the assembly and/or enzymatic activity of the mSin3A corepressor complex or in mediating interactions between the complex and other regulatory complexes. The chain is Sin3 histone deacetylase corepressor complex component SDS3 (SUDS3) from Bos taurus (Bovine).